The chain runs to 147 residues: MVHWTAEEKQLITGLWGKVNVADCGAEALARLLIVYPWTQRFFASFGNLSSPTAILGNPMVRAHGKKVLTSFGDAVKNLDNIKNTFAQLSELHCDKLHVDPENFRLLGDILIIVLAAHFTKDFTPECQAAWQKLVRVVAHALARKYH.

The 145-residue stretch at 3–147 folds into the Globin domain; it reads HWTAEEKQLI…VAHALARKYH (145 aa). Positions 64 and 93 each coordinate heme b.

Belongs to the globin family. Heterotetramer of two alpha chains and two beta chains. Red blood cells.

In terms of biological role, involved in oxygen transport from the lung to the various peripheral tissues. The chain is Hemoglobin subunit beta (HBB) from Anas platyrhynchos (Mallard).